The sequence spans 153 residues: Aspartate carbamoyltransferase regulatory chain (153 aa).

Zn(2+)-binding residues include C109, C114, C138, and C141.

It belongs to the PyrI family. As to quaternary structure, contains catalytic and regulatory chains. It depends on Zn(2+) as a cofactor.

Involved in allosteric regulation of aspartate carbamoyltransferase. This is Aspartate carbamoyltransferase regulatory chain from Salmonella paratyphi A (strain ATCC 9150 / SARB42).